A 664-amino-acid chain; its full sequence is MTEKSNGVKSSPANNHNNHVPATIKANGKDESRTRSRPQSAADDDTSSELQRLAEMDAPQQRRGGFRRIVRLVGVIRQWANRNFREEEARPDSFLERFRGPELQTVTTQQGDGKGDKDGDGKGTKKKFELFVLDPAGDWYYRWLFVIAMPVLYNWCLLVARACFSDLQRGYFLVWLVLDYFSDVVYIADLFIRLRTGFLEQGLLVKDPKKLRDNYIHTLQFKLDVASIIPTDLIYFAVGIHNPELRFNRLLHFARMFEFFDRTETRTSYPNIFRISNLVLYILVIIHWNACIYYAISKSIGFGVDTWVYPNITDPEYGYLAREYIYCLYWSTLTLTTIGETPPPVKDEEYLFVIFDFLIGVLIFATIVGNVGSMISNMNATRAEFQAKIDAVKHYMQFRKVSKEMEAKVIKWFDYLWTNKKTVDEREVLKNLPAKLRAEIAINVHLSTLKKVRIFQDCEAGLLVELVLKLRPQVFSPGDYICRKGDIGKEMYIIKEGKLAVVADDGVTQYALLSAGSCFGEISILNIKGSKMGNRRTANIRSLGYSDLFCLSKDDLMEAVTEYPDAKKVLEERGREILMKEGLLDENEVAASMEVDVQEKLKQLETNMETLYTRFGRLLAEYTGAQQKLKQRITVLEVKMKQNTEDDYLSDGMNSPEPAAAEQP.

Over residues 1 to 20 the composition is skewed to polar residues; sequence MTEKSNGVKSSPANNHNNHV. The interval 1–49 is disordered; sequence MTEKSNGVKSSPANNHNNHVPATIKANGKDESRTRSRPQSAADDDTSSE. Over 1 to 144 the chain is Cytoplasmic; it reads MTEKSNGVKS…PAGDWYYRWL (144 aa). A helical transmembrane segment spans residues 145 to 166; it reads FVIAMPVLYNWCLLVARACFSD. Residues 167-176 are Extracellular-facing; that stretch reads LQRGYFLVWL. Residues 177–197 traverse the membrane as a helical segment; the sequence is VLDYFSDVVYIADLFIRLRTG. Residues 198–222 are Cytoplasmic-facing; the sequence is FLEQGLLVKDPKKLRDNYIHTLQFK. A helical transmembrane segment spans residues 223–241; sequence LDVASIIPTDLIYFAVGIH. The Extracellular portion of the chain corresponds to 242 to 246; sequence NPELR. A helical membrane pass occupies residues 247-265; it reads FNRLLHFARMFEFFDRTET. Topologically, residues 266-272 are cytoplasmic; sequence RTSYPNI. Residues 270-378 are ion conduction pathway; sequence PNIFRISNLV…GNVGSMISNM (109 aa). A helical transmembrane segment spans residues 273–296; it reads FRISNLVLYILVIIHWNACIYYAI. At 297 to 319 the chain is on the extracellular side; the sequence is SKSIGFGVDTWVYPNITDPEYGY. Helical transmembrane passes span 320–354 and 355–379; these read LAREYIYCLYWSTLTLTTIGETPPPVKDEEYLFVI and FDFLIGVLIFATIVGNVGSMISNMN. The tract at residues 337–340 is selectivity filter; sequence TIGE. Positions 380-456 are C-linker; the sequence is ATRAEFQAKI…STLKKVRIFQ (77 aa). Over 380–664 the chain is Cytoplasmic; it reads ATRAEFQAKI…SPEPAAAEQP (285 aa). The interval 460-580 is cyclic nucleotide-binding domain; it reads AGLLVELVLK…EERGREILMK (121 aa). Residues glycine 520, serine 523, arginine 536, and threonine 537 each contribute to the 3',5'-cyclic GMP site. 2 residues coordinate 3',5'-cyclic AMP: arginine 536 and threonine 537. Positions 597–651 form a coiled coil; that stretch reads VQEKLKQLETNMETLYTRFGRLLAEYTGAQQKLKQRITVLEVKMKQNTEDDYLSD. Residues 644 to 664 form a disordered region; it reads TEDDYLSDGMNSPEPAAAEQP.

Belongs to the cyclic nucleotide-gated cation channel (TC 1.A.1.5) family. CNGA2 subfamily. The olfactory cyclic nucleotide-gated channel is an heterotetramer composed of CNGA2, CNGA4 and CNGB1b subunits with 2:1:1 stoichiometry.

Its subcellular location is the cell projection. It localises to the cilium membrane. The enzyme catalyses Ca(2+)(in) = Ca(2+)(out). It carries out the reaction Na(+)(in) = Na(+)(out). It catalyses the reaction K(+)(in) = K(+)(out). The catalysed reaction is NH4(+)(in) = NH4(+)(out). The enzyme catalyses Rb(+)(in) = Rb(+)(out). It carries out the reaction Li(+)(in) = Li(+)(out). It catalyses the reaction Cs(+)(in) = Cs(+)(out). Pore-forming subunit of the olfactory cyclic nucleotide-gated channel. Operates in the cilia of olfactory sensory neurons where chemical stimulation of the odorant is converted to an electrical signal. Mediates odorant-induced cAMP-dependent Ca(2+) influx triggering neuron depolarization. The rise of intracellular Ca(2+) levels potentiates the olfactory response by activating Ca(2+)-dependent Cl(-) channels, but it also serves as a negative feedback signal to desensitize the channel for rapid adaptation to odorants. Conducts cAMP- and cGMP-gated ion currents, with permeability for monovalent and divalent cations. This is Cyclic nucleotide-gated channel alpha-2 from Oryctolagus cuniculus (Rabbit).